The primary structure comprises 152 residues: Ninjurin-1 (152 aa).

Position 1 is an N-acetylmethionine (Met1). Positions 1 to 10 (MDPGTEEYEL) are enriched in acidic residues. Residues 1 to 30 (MDPGTEEYELNGDLRPGSPGSPDASPPRWG) form a disordered region. The Extracellular portion of the chain corresponds to 1–78 (MDPGTEEYEL…EQGNEFAFFV (78 aa)). The span at 16–27 (PGSPGSPDASPP) shows a compositional bias: low complexity. A phosphoserine mark is found at Ser18, Ser21, and Ser25. Residues 26–37 (PPRWGLRNRPIN) form an N-terminal adhesion motif region. The segment at 40–69 (HYANKKSAAESMLDIALLMANASQLKAVVE) is required to induce plasma membrane rupture. The segment at 44–55 (KKSAAESMLDIA) is helix alpha1. The helix alpha2 stretch occupies residues 58 to 74 (MANASQLKAVVEQGNEF). Residue Asn60 is glycosylated (N-linked (GlcNAc...) asparagine). The chain crosses the membrane as a helical span at residues 79 to 103 (PLVVLISISLVLQIGVGVLLIFLVK). Topologically, residues 104 to 113 (YDLNNPAKHA) are cytoplasmic. Residues 114–138 (KLDFLNNLATGLVFIIVVVNIFITA) traverse the membrane as a helical segment. Topologically, residues 139-152 (FGVQKPVMDVAPRQ) are extracellular.

It belongs to the ninjurin family. Homodimer; in absence of death stimuli, forms an inactive homodimer. Homooligomer; in response to death stimuli, homooligomerizes into long, highly branched filaments and large, ring-shaped structures in the membrane. The topology shown in the entry corresponds to the activated form. In terms of processing, cleaved by MMP9 protease to generate the Secreted ninjurin-1 form. Post-translationally, N-linked glycosylation is required for homooligomerization.

Its subcellular location is the cell membrane. It is found in the synaptic cell membrane. The protein resides in the secreted. With respect to regulation, in response to death stimuli, homooligomerizes and disrupts membrane integrity by introducing the hydrophilic faces of alpha1 and alpha2 helices into the hydrophobic membrane. Homooligomerization and ability to mediate plasma membrane rupture is inhibited by glycine; it is unclear whether glycine directly or indirectly inhibits homooligomerization. In normal conditions, NINJ1 is autoinhibited via formation of a homodimer: in the inactive homodimer, the alpha1 and alpha2 helices (residues 44-74) form a single transmembrane region without a kink, in which hydrophilic faces of alpha1 and alpha2 helices are sequestered. Its function is as follows. Effector of various programmed cell death, such as pyroptosis and necroptosis, which mediates plasma membrane rupture (cytolysis). Oligomerizes in response to death stimuli and forms ring-like structures on the plasma membrane: acts by cutting and shedding membrane disks, like a cookie cutter, leading to membrane damage and loss that cannot be repaired by the cell. Plasma membrane rupture leads to release intracellular molecules named damage-associated molecular patterns (DAMPs) that propagate the inflammatory response. Mechanistically, mediates plasma membrane rupture by introducing hydrophilic faces of 2 alpha helices into the hydrophobic membrane. Induces plasma membrane rupture downstream of Gasdermin (GSDMA, GSDMB, GSDMC, GSDMD, or GSDME) or MLKL during pyroptosis or necroptosis, respectively. Acts as an effector of PANoptosis downstream of CASP1, CASP4, CASP8 and RIPK3. Also induces plasma membrane rupture in response to cell swelling caused by osmotic stress and ferroptosis downstream of lipid peroxidation. Acts as a regulator of Toll-like receptor 4 (TLR4) signaling triggered by lipopolysaccharide (LPS) during systemic inflammation; directly binds LPS. Involved in leukocyte migration during inflammation by promoting transendothelial migration of macrophages via homotypic binding. Promotes the migration of monocytes across the brain endothelium to central nervous system inflammatory lesions. Also acts as a homophilic transmembrane adhesion molecule involved in various processes such as axonal growth, cell chemotaxis and angiogenesis. Promotes cell adhesion by mediating homophilic interactions via its extracellular N-terminal adhesion motif (N-NAM). Involved in the progression of the inflammatory stress by promoting cell-to-cell interactions between immune cells and endothelial cells. Plays a role in nerve regeneration by promoting maturation of Schwann cells. Acts as a regulator of angiogenesis. Promotes the formation of new vessels by mediating the interaction between capillary pericyte cells and endothelial cells. Promotes osteoclasts development by enhancing the survival of prefusion osteoclasts. Also involved in striated muscle growth and differentiation. Secreted form generated by cleavage, which has chemotactic activity. Acts as an anti-inflammatory mediator by promoting monocyte recruitment, thereby ameliorating atherosclerosis. The polypeptide is Ninjurin-1 (Rattus norvegicus (Rat)).